The sequence spans 184 residues: TRAF-interacting protein with FHA domain-containing protein A (184 aa).

Threonine 9 is subject to Phosphothreonine. One can recognise an FHA domain in the interval 47 to 103 (VKFGRNSNMCQYTFQDKQVSRIQFVLQPFKQFNSSVLSFEIKNMSKKTSLMVDNQEL). The disordered stretch occupies residues 152-184 (NNWPTQNPIPEDGMYSSYFTHRSSPSEMDENEL). Positions 168–177 (SYFTHRSSPS) are enriched in polar residues.

This sequence belongs to the TIFA family. Homooligomer; homooligomerizes following phosphorylation at Thr-9. Interacts with IRAK1, TRAF2 and TRAF6. Interacts with TIFAB; binding to TIFAB inhibits TRAF6 activation, possibly by inducing a conformational change in TIFA. Interacts with ZCCHC11; binding to ZCCHC11 suppresses the TRAF6-dependent activation of NF-kappa-B. In terms of processing, phosphorylated at Thr-9 following detection of ADP-D-glycero-beta-D-manno-heptose (ADP-Heptose) by ALPK1. Phosphorylation at Thr-9 by ALPK1 leads to the formation of an intermolecular binding between the FHA domain and phosphorylated Thr-9, promoting TIFA oligomerization and TIFA-mediated NF-kappa-B activation. In terms of tissue distribution, highly expressed in the spleen and at lower levels in heart, brain, lung, liver, kidney and testes.

It localises to the cytoplasm. In terms of biological role, adapter molecule that plays a key role in the activation of pro-inflammatory NF-kappa-B signaling following detection of bacterial pathogen-associated molecular pattern metabolites (PAMPs). Promotes activation of an innate immune response by inducing the oligomerization and polyubiquitination of TRAF6, which leads to the activation of TAK1 and IKK through a proteasome-independent mechanism. TIFA-dependent innate immune response is triggered by ADP-D-glycero-beta-D-manno-heptose (ADP-Heptose), a potent PAMP present in all Gram-negative and some Gram-positive bacteria: ADP-Heptose is recognized by ALPK1, which phosphorylates TIFA at Thr-9, leading to TIFA homooligomerization and subsequent activation of pro-inflammatory NF-kappa-B signaling. This Mus musculus (Mouse) protein is TRAF-interacting protein with FHA domain-containing protein A.